Here is a 309-residue protein sequence, read N- to C-terminus: Homoserine kinase (309 aa).

Residue 91–101 coordinates ATP; sequence PIGSGLGSSAC.

The protein belongs to the GHMP kinase family. Homoserine kinase subfamily.

It is found in the cytoplasm. It carries out the reaction L-homoserine + ATP = O-phospho-L-homoserine + ADP + H(+). Its pathway is amino-acid biosynthesis; L-threonine biosynthesis; L-threonine from L-aspartate: step 4/5. In terms of biological role, catalyzes the ATP-dependent phosphorylation of L-homoserine to L-homoserine phosphate. The chain is Homoserine kinase from Yersinia enterocolitica serotype O:8 / biotype 1B (strain NCTC 13174 / 8081).